Reading from the N-terminus, the 533-residue chain is Multicopy suppressor of sporulation protein msa1 (533 aa).

Residues aspartate 30–leucine 68 form a disordered region. Residues leucine 36–phenylalanine 45 are compositionally biased toward polar residues. Residues serine 54–leucine 68 show a composition bias toward low complexity. The 80-residue stretch at alanine 79–valine 158 folds into the RRM 1 domain. A disordered region spans residues tyrosine 237 to alanine 292. Over residues serine 277–alanine 292 the composition is skewed to polar residues. Positions tyrosine 365 to leucine 441 constitute an RRM 2 domain.

Its subcellular location is the cytoplasm. Functionally, negative regulator of sexual differentiation. Acts by repressing the transcription of meiosis-inducing, ste11-regulated genes. This chain is Multicopy suppressor of sporulation protein msa1 (msa1), found in Schizosaccharomyces pombe (strain 972 / ATCC 24843) (Fission yeast).